The sequence spans 193 residues: Small ribosomal subunit protein eS1 (193 aa).

It belongs to the eukaryotic ribosomal protein eS1 family.

The chain is Small ribosomal subunit protein eS1 from Sulfurisphaera tokodaii (strain DSM 16993 / JCM 10545 / NBRC 100140 / 7) (Sulfolobus tokodaii).